The sequence spans 189 residues: dCTP deaminase (189 aa).

Residues 112–117, 136–138, glutamine 157, tyrosine 171, and glutamine 181 each bind dCTP; these read KSTYAR and TLE. Glutamate 138 serves as the catalytic Proton donor/acceptor.

Belongs to the dCTP deaminase family. As to quaternary structure, homotrimer.

It carries out the reaction dCTP + H2O + H(+) = dUTP + NH4(+). It functions in the pathway pyrimidine metabolism; dUMP biosynthesis; dUMP from dCTP (dUTP route): step 1/2. In terms of biological role, catalyzes the deamination of dCTP to dUTP. In Burkholderia orbicola (strain MC0-3), this protein is dCTP deaminase.